The chain runs to 206 residues: Thymidylate kinase (206 aa).

10-17 (GIDGAGKS) provides a ligand contact to ATP.

The protein belongs to the thymidylate kinase family.

The catalysed reaction is dTMP + ATP = dTDP + ADP. In terms of biological role, phosphorylation of dTMP to form dTDP in both de novo and salvage pathways of dTTP synthesis. This is Thymidylate kinase (tmk) from Neisseria meningitidis serogroup B (strain ATCC BAA-335 / MC58).